A 270-amino-acid polypeptide reads, in one-letter code: Formamidopyrimidine-DNA glycosylase (270 aa).

Pro2 serves as the catalytic Schiff-base intermediate with DNA. Glu3 acts as the Proton donor in catalysis. The active-site Proton donor; for beta-elimination activity is the Lys58. 3 residues coordinate DNA: His91, Arg109, and Arg151. An FPG-type zinc finger spans residues 236–270 (LVYGRGGEACKTCQKPLKEIRMNDRTTVYCVTCQQ). The Proton donor; for delta-elimination activity role is filled by Arg260.

It belongs to the FPG family. In terms of assembly, monomer. The cofactor is Zn(2+).

It catalyses the reaction Hydrolysis of DNA containing ring-opened 7-methylguanine residues, releasing 2,6-diamino-4-hydroxy-5-(N-methyl)formamidopyrimidine.. It carries out the reaction 2'-deoxyribonucleotide-(2'-deoxyribose 5'-phosphate)-2'-deoxyribonucleotide-DNA = a 3'-end 2'-deoxyribonucleotide-(2,3-dehydro-2,3-deoxyribose 5'-phosphate)-DNA + a 5'-end 5'-phospho-2'-deoxyribonucleoside-DNA + H(+). Functionally, involved in base excision repair of DNA damaged by oxidation or by mutagenic agents. Acts as a DNA glycosylase that recognizes and removes damaged bases. Has a preference for oxidized purines, such as 7,8-dihydro-8-oxoguanine (8-oxoG). Has AP (apurinic/apyrimidinic) lyase activity and introduces nicks in the DNA strand. Cleaves the DNA backbone by beta-delta elimination to generate a single-strand break at the site of the removed base with both 3'- and 5'-phosphates. The polypeptide is Formamidopyrimidine-DNA glycosylase (Cellvibrio japonicus (strain Ueda107) (Pseudomonas fluorescens subsp. cellulosa)).